The primary structure comprises 60 residues: Ixodegrin-like peptide (60 aa).

Residues 1-21 form the signal peptide; that stretch reads MNAAFIAALLILGALTLDAMA. Residues 49-51 carry the Cell attachment site motif; it reads RGD.

This sequence belongs to the ixodegrin family. Contains 3 disulfide bonds. Expressed in salivary glands.

It localises to the secreted. In terms of biological role, tick salivary platelet aggregation inhibitor that plays an important part in the anti-hemostatic strategy of ticks. Inhibits platelet aggregation induced by ADP, thrombin and thromboxane A2 (TXA2). Blocks platelet adhesion to soluble collagen (most probably through the binding to alpha-2/beta-1 integrin (ITGA2/ITGB1)) and binds to purified glycoprotein IIb/IIIa (ITGA2B/ITGB3) in a dose-dependent manner. In vivo, reduces thrombus weight effectively in a rat arteriovenous shunt model and inhibits thrombosis in a carrageenan-induced mouse tail thrombosis model. This Ixodes scapularis (Black-legged tick) protein is Ixodegrin-like peptide.